We begin with the raw amino-acid sequence, 337 residues long: Phosphate acyltransferase (337 aa).

This sequence belongs to the PlsX family. In terms of assembly, homodimer. Probably interacts with PlsY.

It localises to the cytoplasm. The catalysed reaction is a fatty acyl-[ACP] + phosphate = an acyl phosphate + holo-[ACP]. The protein operates within lipid metabolism; phospholipid metabolism. Its function is as follows. Catalyzes the reversible formation of acyl-phosphate (acyl-PO(4)) from acyl-[acyl-carrier-protein] (acyl-ACP). This enzyme utilizes acyl-ACP as fatty acyl donor, but not acyl-CoA. The protein is Phosphate acyltransferase of Polynucleobacter asymbioticus (strain DSM 18221 / CIP 109841 / QLW-P1DMWA-1) (Polynucleobacter necessarius subsp. asymbioticus).